Here is a 179-residue protein sequence, read N- to C-terminus: Large ribosomal subunit protein uL15 (179 aa).

This sequence belongs to the universal ribosomal protein uL15 family. In terms of assembly, part of the 50S ribosomal subunit.

Functionally, binds to the 23S rRNA. The sequence is that of Large ribosomal subunit protein uL15 from Archaeoglobus fulgidus (strain ATCC 49558 / DSM 4304 / JCM 9628 / NBRC 100126 / VC-16).